Here is a 103-residue protein sequence, read N- to C-terminus: Carboxysome shell protein CsoS1 (103 aa).

The BMC domain occupies 9–94; sequence ALGMIETRGL…PHREVEPALG (86 aa).

It belongs to the bacterial microcompartments protein family. CsoS1 subfamily. Homohexamer with a small central pore. Forms a CsoS2-CsoS1-RuBisCO complex.

The protein resides in the carboxysome. Its function is as follows. One of the shell proteins of the carboxysome, a polyhedral inclusion where RuBisCO (ribulose bisphosphate carboxylase, ccbL-ccbS) is sequestered. Assembles into hexamers which make sheets that form the facets of the polyhedral carboxysome. This chain is Carboxysome shell protein CsoS1, found in Prochlorococcus marinus (strain MIT 9313).